Here is a 95-residue protein sequence, read N- to C-terminus: Aspartyl/glutamyl-tRNA(Asn/Gln) amidotransferase subunit C (95 aa).

Belongs to the GatC family. As to quaternary structure, heterotrimer of A, B and C subunits.

It carries out the reaction L-glutamyl-tRNA(Gln) + L-glutamine + ATP + H2O = L-glutaminyl-tRNA(Gln) + L-glutamate + ADP + phosphate + H(+). The catalysed reaction is L-aspartyl-tRNA(Asn) + L-glutamine + ATP + H2O = L-asparaginyl-tRNA(Asn) + L-glutamate + ADP + phosphate + 2 H(+). Functionally, allows the formation of correctly charged Asn-tRNA(Asn) or Gln-tRNA(Gln) through the transamidation of misacylated Asp-tRNA(Asn) or Glu-tRNA(Gln) in organisms which lack either or both of asparaginyl-tRNA or glutaminyl-tRNA synthetases. The reaction takes place in the presence of glutamine and ATP through an activated phospho-Asp-tRNA(Asn) or phospho-Glu-tRNA(Gln). This chain is Aspartyl/glutamyl-tRNA(Asn/Gln) amidotransferase subunit C, found in Methylobacterium radiotolerans (strain ATCC 27329 / DSM 1819 / JCM 2831 / NBRC 15690 / NCIMB 10815 / 0-1).